Consider the following 1447-residue polypeptide: Bud site selection protein 4 (1447 aa).

Residues 1-16 (MHDAESTVDSLLKEID) are compositionally biased toward basic and acidic residues. 2 disordered regions span residues 1–38 (MHDAESTVDSLLKEIDNEMEQTKSNITQNGSEDTPHNW) and 57–76 (NTRSNATENSRGRSPSKMST). Serine 10 is modified (phosphoserine). Polar residues-rich tracts occupy residues 22-32 (TKSNITQNGSE) and 59-76 (RSNATENSRGRSPSKMST). Residues serine 78, serine 81, serine 91, serine 96, and serine 167 each carry the phosphoserine modification. The segment at 272–316 (NLPSKLLNTSNNSHSDSRSPTASVEDLNISTNLPGADSSQNNPVT) is disordered. Over residues 277–316 (LLNTSNNSHSDSRSPTASVEDLNISTNLPGADSSQNNPVT) the composition is skewed to polar residues. Threonine 365 bears the Phosphothreonine mark. Serine 367 bears the Phosphoserine mark. Positions 444-479 (HQESEHANEQPAIIPQKDSSEETFTELNNESEFQRN) are disordered. A Phosphoserine modification is found at serine 511. The disordered stretch occupies residues 529–591 (KTSAEEHDLS…NEEPEHVPLL (63 aa)). Residues 538-548 (SSSCEDQSVSE) show a composition bias toward polar residues. The segment covering 549–580 (ARNKDRIEEKEVETKDENIETEKDESEYHKVE) has biased composition (basic and acidic residues). Serine 616 bears the Phosphoserine mark. Polar residues predominate over residues 648–664 (ANSQFSQQSSITTASTV). Residues 648-673 (ANSQFSQQSSITTASTVDSKKDNGST) form a disordered region. Residues 768–879 (EHENIPLSTH…SLWESSYELK (112 aa)) are interaction with IQG1. Phosphoserine is present on residues serine 805 and serine 811. One can recognise a PH domain in the interval 1302–1413 (NIYKEGYLLQ…WYNKLQEVVE (112 aa)).

In terms of assembly, interacts with AXL1, AXL2, IQG1 and SEC3. In terms of processing, phosphorylated by CDC28.

The protein resides in the bud neck. Functionally, required for establishment of the axial budding pattern in haploid cells. Cooperates with other bud site selection proteins to recognize a spatial landmark during mitosis and they subsequently become a landmark for downstream polarity establishment factors that coordinate axial budding and cytokinesis. Involved in the septin organization at the bud neck. This Saccharomyces cerevisiae (strain ATCC 204508 / S288c) (Baker's yeast) protein is Bud site selection protein 4 (BUD4).